Consider the following 684-residue polypeptide: Cleavage and polyadenylation specificity factor subunit 3 (684 aa).

An N-acetylserine modification is found at Ser2. Positions 71, 73, 75, 76, 158, and 179 each coordinate Zn(2+). The Proton donor role is filled by His396. His418 provides a ligand contact to Zn(2+). Residues Lys462, Lys465, and Lys545 each participate in a glycyl lysine isopeptide (Lys-Gly) (interchain with G-Cter in SUMO) cross-link. Ser659 carries the phosphoserine modification. Thr681 is modified (phosphothreonine).

It belongs to the metallo-beta-lactamase superfamily. RNA-metabolizing metallo-beta-lactamase-like family. CPSF3 subfamily. As to quaternary structure, component of the cleavage and polyadenylation specificity factor (CPSF) complex, composed of CPSF1, CPSF2, CPSF3, CPSF4 and FIP1L1. Interacts with CPSF2, CSTF2 and SYMPK. Interacts with TUT1; the interaction is direct and mediates the recruitment of the CPSF complex on the 3'UTR of pre-mRNAs. Interacts with WDR33. Interacts with ZC3H3. It depends on Zn(2+) as a cofactor. In terms of processing, sumoylated on Lys-462, Lys-465 and Lys-545, preferentially by SUMO3.

The protein resides in the nucleus. In terms of biological role, component of the cleavage and polyadenylation specificity factor (CPSF) complex that plays a key role in pre-mRNA 3'-end formation, recognizing the AAUAAA signal sequence and interacting with poly(A) polymerase and other factors to bring about cleavage and poly(A) addition. Has endonuclease activity, and functions as an mRNA 3'-end-processing endonuclease. Also involved in the histone 3'-end pre-mRNA processing. U7 snRNP-dependent protein that induces both the 3'-endoribonucleolytic cleavage of histone pre-mRNAs and acts as a 5' to 3' exonuclease for degrading the subsequent downstream cleavage product (DCP) of mature histone mRNAs. Cleavage occurs after the 5'-ACCCA-3' sequence in the histone pre-mRNA leaving a 3'hydroxyl group on the upstream fragment containing the stem loop (SL) and 5' phosphate on the downstream cleavage product (DCP) starting with CU nucleotides. The U7-dependent 5' to 3' exonuclease activity is processive and degrades the DCP RNA substrate even after complete removal of the U7-binding site. Binds to the downstream cleavage product (DCP) of histone pre-mRNAs and the cleaved DCP RNA substrate in a U7 snRNP dependent manner. Required for entering/progressing through S-phase of the cell cycle. Required for the selective processing of microRNAs (miRNAs) during embryonic stem cell differentiation via its interaction with ISY1. Required for the biogenesis of all miRNAs from the pri-miR-17-92 primary transcript except miR-92a. Only required for the biogenesis of miR-290 and miR-96 from the pri-miR-290-295 and pri-miR-96-183 primary transcripts, respectively. The chain is Cleavage and polyadenylation specificity factor subunit 3 (CPSF3) from Homo sapiens (Human).